A 457-amino-acid polypeptide reads, in one-letter code: Siroheme synthase (457 aa).

Residues 1–204 (MDHLPIFCQL…ADEKAVNATT (204 aa)) are precorrin-2 dehydrogenase /sirohydrochlorin ferrochelatase. Residues 22–23 (DV) and 43–44 (LT) each bind NAD(+). Residue Ser128 is modified to Phosphoserine. Positions 216 to 457 (GEVVLVGAGP…RDKLNWFSNH (242 aa)) are uroporphyrinogen-III C-methyltransferase. Pro225 provides a ligand contact to S-adenosyl-L-methionine. Asp248 (proton acceptor) is an active-site residue. Lys270 serves as the catalytic Proton donor. Residues 301 to 303 (GGD), Ile306, 331 to 332 (TA), Met382, and Gly411 each bind S-adenosyl-L-methionine.

The protein in the N-terminal section; belongs to the precorrin-2 dehydrogenase / sirohydrochlorin ferrochelatase family. This sequence in the C-terminal section; belongs to the precorrin methyltransferase family.

The enzyme catalyses uroporphyrinogen III + 2 S-adenosyl-L-methionine = precorrin-2 + 2 S-adenosyl-L-homocysteine + H(+). It catalyses the reaction precorrin-2 + NAD(+) = sirohydrochlorin + NADH + 2 H(+). The catalysed reaction is siroheme + 2 H(+) = sirohydrochlorin + Fe(2+). It functions in the pathway cofactor biosynthesis; adenosylcobalamin biosynthesis; precorrin-2 from uroporphyrinogen III: step 1/1. The protein operates within cofactor biosynthesis; adenosylcobalamin biosynthesis; sirohydrochlorin from precorrin-2: step 1/1. Its pathway is porphyrin-containing compound metabolism; siroheme biosynthesis; precorrin-2 from uroporphyrinogen III: step 1/1. It participates in porphyrin-containing compound metabolism; siroheme biosynthesis; siroheme from sirohydrochlorin: step 1/1. It functions in the pathway porphyrin-containing compound metabolism; siroheme biosynthesis; sirohydrochlorin from precorrin-2: step 1/1. Functionally, multifunctional enzyme that catalyzes the SAM-dependent methylations of uroporphyrinogen III at position C-2 and C-7 to form precorrin-2 via precorrin-1. Then it catalyzes the NAD-dependent ring dehydrogenation of precorrin-2 to yield sirohydrochlorin. Finally, it catalyzes the ferrochelation of sirohydrochlorin to yield siroheme. This is Siroheme synthase from Salmonella schwarzengrund (strain CVM19633).